The chain runs to 436 residues: Hydrogenobyrinate a,c-diamide synthase (436 aa).

A GATase cobBQ-type domain is found at 244 to 435; sequence RIAVARDDAF…MHVIDFSGEA (192 aa). Cys-327 acts as the Nucleophile in catalysis.

It belongs to the CobB/CbiA family. Mg(2+) serves as cofactor.

It catalyses the reaction hydrogenobyrinate + 2 L-glutamine + 2 ATP + 2 H2O = hydrogenobyrinate a,c-diamide + 2 L-glutamate + 2 ADP + 2 phosphate + 2 H(+). The protein operates within cofactor biosynthesis; adenosylcobalamin biosynthesis; cob(II)yrinate a,c-diamide from precorrin-2 (aerobic route): step 9/10. Functionally, catalyzes the ATP-dependent amidation of the two carboxylate groups at positions a and c of hydrogenobyrinate, using either L-glutamine or ammonia as the nitrogen source. The polypeptide is Hydrogenobyrinate a,c-diamide synthase (Brucella suis biovar 1 (strain 1330)).